The primary structure comprises 494 residues: Glycerol kinase (494 aa).

Thr-13 contacts ADP. Residues Thr-13, Thr-14, and Ser-15 each coordinate ATP. Thr-13 serves as a coordination point for sn-glycerol 3-phosphate. Arg-17 is an ADP binding site. Arg-83, Glu-84, Tyr-135, and Asp-244 together coordinate sn-glycerol 3-phosphate. Glycerol is bound by residues Arg-83, Glu-84, Tyr-135, Asp-244, and Gln-245. 2 residues coordinate ADP: Thr-266 and Gly-309. ATP contacts are provided by Thr-266, Gly-309, Gln-313, and Gly-410. Residues Gly-410 and Asn-414 each contribute to the ADP site.

This sequence belongs to the FGGY kinase family.

The enzyme catalyses glycerol + ATP = sn-glycerol 3-phosphate + ADP + H(+). Its pathway is polyol metabolism; glycerol degradation via glycerol kinase pathway; sn-glycerol 3-phosphate from glycerol: step 1/1. Inhibited by fructose 1,6-bisphosphate (FBP). Key enzyme in the regulation of glycerol uptake and metabolism. Catalyzes the phosphorylation of glycerol to yield sn-glycerol 3-phosphate. The sequence is that of Glycerol kinase from Shewanella putrefaciens (strain CN-32 / ATCC BAA-453).